The sequence spans 342 residues: Trans-3-hydroxy-L-proline dehydratase (342 aa).

Catalysis depends on serine 90, which acts as the Proton acceptor. Substrate-binding positions include 91 to 92, aspartate 252, and 257 to 258; these read GS and GT.

Belongs to the proline racemase family.

It catalyses the reaction trans-3-hydroxy-L-proline = 1-pyrroline-2-carboxylate + H2O. In terms of biological role, catalyzes the dehydration of trans-3-hydroxy-L-proline (t3LHyp) to Delta(1)-pyrroline-2-carboxylate (Pyr2C). Is likely involved in a degradation pathway that converts t3LHyp to L-proline. Displays neither proline racemase activity nor 4-hydroxyproline 2-epimerase activity. This Allorhizobium ampelinum (strain ATCC BAA-846 / DSM 112012 / S4) (Agrobacterium vitis (strain S4)) protein is Trans-3-hydroxy-L-proline dehydratase.